We begin with the raw amino-acid sequence, 287 residues long: ATP synthase gamma chain (287 aa).

The protein belongs to the ATPase gamma chain family. As to quaternary structure, F-type ATPases have 2 components, CF(1) - the catalytic core - and CF(0) - the membrane proton channel. CF(1) has five subunits: alpha(3), beta(3), gamma(1), delta(1), epsilon(1). CF(0) has three main subunits: a, b and c.

It localises to the cell inner membrane. Its function is as follows. Produces ATP from ADP in the presence of a proton gradient across the membrane. The gamma chain is believed to be important in regulating ATPase activity and the flow of protons through the CF(0) complex. The chain is ATP synthase gamma chain from Stenotrophomonas maltophilia (strain K279a).